A 189-amino-acid chain; its full sequence is dCTP deaminase (189 aa).

Residues 112–117 (KSTYAR), 136–138 (TLE), glutamine 157, tyrosine 171, and glutamine 181 contribute to the dCTP site. Glutamate 138 serves as the catalytic Proton donor/acceptor.

It belongs to the dCTP deaminase family. In terms of assembly, homotrimer.

The enzyme catalyses dCTP + H2O + H(+) = dUTP + NH4(+). It functions in the pathway pyrimidine metabolism; dUMP biosynthesis; dUMP from dCTP (dUTP route): step 1/2. Functionally, catalyzes the deamination of dCTP to dUTP. The protein is dCTP deaminase of Teredinibacter turnerae (strain ATCC 39867 / T7901).